Reading from the N-terminus, the 346-residue chain is Phenylalanine--tRNA ligase alpha subunit (346 aa).

Mg(2+) is bound at residue glutamate 259.

The protein belongs to the class-II aminoacyl-tRNA synthetase family. Phe-tRNA synthetase alpha subunit type 1 subfamily. Tetramer of two alpha and two beta subunits. The cofactor is Mg(2+).

The protein resides in the cytoplasm. The enzyme catalyses tRNA(Phe) + L-phenylalanine + ATP = L-phenylalanyl-tRNA(Phe) + AMP + diphosphate + H(+). This is Phenylalanine--tRNA ligase alpha subunit from Lactococcus lactis subsp. lactis (strain IL1403) (Streptococcus lactis).